We begin with the raw amino-acid sequence, 156 residues long: MTSVIYPGTFDPITNGHLDIIERSAVIFPRVLVAVANSPSKKPLFSLEERVELVRQSVAHLSNVEVFGFSDLLANVIKQHNISAIIRGVRTTTDFEYELQLAALNRLLTKGVDSLFFPPAEKWAFVSSTIVREIYLHGGDVAELVPEPVFNALKAR.

Thr9 serves as a coordination point for substrate. ATP is bound by residues 9-10 (TF) and His17. Positions 41, 73, and 87 each coordinate substrate. ATP-binding positions include 88–90 (GVR), Glu98, and 123–129 (WAFVSST).

The protein belongs to the bacterial CoaD family. Homohexamer. Requires Mg(2+) as cofactor.

It localises to the cytoplasm. The enzyme catalyses (R)-4'-phosphopantetheine + ATP + H(+) = 3'-dephospho-CoA + diphosphate. It participates in cofactor biosynthesis; coenzyme A biosynthesis; CoA from (R)-pantothenate: step 4/5. Its function is as follows. Reversibly transfers an adenylyl group from ATP to 4'-phosphopantetheine, yielding dephospho-CoA (dPCoA) and pyrophosphate. In Haemophilus influenzae (strain 86-028NP), this protein is Phosphopantetheine adenylyltransferase.